A 488-amino-acid polypeptide reads, in one-letter code: Protein Notchless (488 aa).

The disordered stretch occupies residues methionine 1–isoleucine 22. Residues proline 19–alanine 101 are ubiquitin-like (UBL) domain. 8 WD repeats span residues glycine 117 to threonine 156, glycine 159 to arginine 198, glycine 202 to asparagine 246, glycine 249 to threonine 287, leucine 329 to arginine 370, glycine 373 to threonine 412, glycine 415 to glutamate 454, and glycine 457 to tyrosine 488.

This sequence belongs to the NLE1/RSA4 family. As to quaternary structure, interacts with Notch (via cytoplasmic domain). Associates with the pre-60S ribosomal particle.

The protein resides in the nucleus. Its subcellular location is the nucleolus. Its function is as follows. Plays a role in regulating Notch activity. This is Protein Notchless from Drosophila melanogaster (Fruit fly).